The chain runs to 2892 residues: Inositol 1,4,5-trisphosphate receptor itr-1 (2892 aa).

Residues 1 to 2475 (MNPSYGRVRK…YPLPEHSNSS (2475 aa)) lie on the Cytoplasmic side of the membrane. MIR domains are found at residues 192-246 (GNVI…IEPA), 319-379 (QNSV…VQVV), 386-466 (GGTA…LGPT), and 490-551 (NKEV…LLPV). 357–361 (RMTNR) provides a ligand contact to 1D-myo-inositol 1,4,5-trisphosphate. 1D-myo-inositol 1,4,5-trisphosphate contacts are provided by residues 625-628 (KLLR) and 689-691 (YRK). The interval 1030-1056 (MMRGGNKENSKDLAKTPSVTAEEAGRT) is disordered. A compositionally biased stretch (basic and acidic residues) spans 1034 to 1043 (GNKENSKDLA). A helical membrane pass occupies residues 2476–2496 (ISLGNLYSWFAVFSSFLLAHY). At 2497–2514 (LRHDKIYLHKTSLLILAS) the chain is on the extracellular side. A helical membrane pass occupies residues 2515–2535 (LCFLLLSSIGVTLTLYIFGIL). Topologically, residues 2536–2572 (QLVNKIVHVVAFVSNKGLEDRPIAEILACRNLHYLLV) are cytoplasmic. Residues 2573-2593 (YLFICILGLLVHPMIYCILLF) traverse the membrane as a helical segment. Residues 2594-2615 (DIIFTEETLQNVIASVTRNYQS) are Extracellular-facing. A helical membrane pass occupies residues 2616–2636 (IVWTGLLALILLYFFSILGFL). The Cytoplasmic segment spans residues 2637–2735 (YFRHDFYLEV…FIWRVAYDMT (99 aa)). Over residues 2655 to 2666 (ATISSGIPSETC) the composition is skewed to polar residues. Residues 2655 to 2685 (ATISSGIPSETCPSEGCPGLQPSEKDDNDDE) are disordered. A helical membrane pass occupies residues 2736 to 2756 (FFVVLIVIVLNLIFGVIIDTF). At 2757-2892 (GDLRAEKNEK…RAFMEQFQPR (136 aa)) the chain is on the extracellular side.

The protein belongs to the InsP3 receptor family. As to quaternary structure, interacts with myo-1, myo-2, unc-54/myo-4 and nmy-2. Also interacts with iri-1. As to expression, isoform a is expressed in the anterior cells of the pharyngeal terminal bulb, vulva, rectal epithelial cells, spicule protractor muscles of the proctodeum and male-specific neuron CP8 or CP9. Isoform d is expressed in the spermatheca, excretory cell, amphid socket cells, PDA motor neuron, spicule retractor muscles, gubernaculum retractor muscles, posterior oblique muscles, diagonal muscles and the vas deferens. Also expressed in the intestine, pharynx, pharyngeal isthmus, pharyngeal intestinal valve, somatic gonad, hypodermal cells of the vulva, uterine sheath cells, tail, head, LUA motor neuron and the embryonic epidermis (at protein level).

The protein localises to the endoplasmic reticulum membrane. Its function is as follows. Receptor for inositol 1,4,5-trisphosphate, a second messenger that regulates intracellular calcium homeostasis. Binds in vitro to both inositol 1,4,5-trisphosphate (1,4,5-InsP3) and inositol 2,4,5-trisphosphate (2,4,5-InsP3) with high affinity and does not discriminate between the phosphate at 1 or 2 position. Can also bind inositol 1,3,4,5-tetrakisphosphate (1,3,4,5-InsP4) and inositol 4,5-bisphosphate (4,5-InsP2), but with lower affinity. Acts as a timekeeper/rhythm generator via calcium signaling, affecting the defecation cycle and pharyngeal pumping. Affects normal hermaphrodite and male fertility as a participant in intracellular signaling by acting downstream of let-23/lin-3 which regulates ovulation, spermathecal valve dilation and male mating behavior. Important for early embryonic development; controls epidermal cell migration and may also regulate filopodial protrusive activity during epithelial morphogenesis. Component of inositol trisphosphate (IP3)-mediated downstream signaling pathways that controls amphid sensory neuronal (ASH)-mediated response to nose touch and benzaldehyde but not other ASH-mediated responses. Involved in modulating lifespan, acting downstream of transcription factor atf-6. This chain is Inositol 1,4,5-trisphosphate receptor itr-1, found in Caenorhabditis elegans.